Reading from the N-terminus, the 532-residue chain is Zinc finger protein 350 (532 aa).

The KRAB domain maps to 8–79; sequence ITLEDVAVDF…EDGIHSGACS (72 aa). 8 consecutive C2H2-type zinc fingers follow at residues 206-228, 234-256, 262-284, 290-312, 318-340, 346-368, 374-396, and 402-424; these read HVCS…QVMH, HRCS…QRTH, YECP…QKTH, YICS…QRIH, YICN…QRFH, FVCS…QRIH, FECS…QRTH, and YGCN…KRIH. A compositionally biased stretch (basic and acidic residues) spans 427–443; it reads EKQEAAKVENPPAERHS. The tract at residues 427–465 is disordered; that stretch reads EKQEAAKVENPPAERHSSLHTSDVMQEKNSANGATTQVP. A compositionally biased stretch (polar residues) spans 445-465; sequence LHTSDVMQEKNSANGATTQVP.

The protein belongs to the krueppel C2H2-type zinc-finger protein family. In terms of assembly, interacts with BRCA1. Interacts with RNF11. Widely expressed.

The protein localises to the nucleus. Its subcellular location is the nucleus matrix. Its function is as follows. Transcriptional repressor. Binds to a specific sequence, 5'-GGGxxxCAGxxxTTT-3', within GADD45 intron 3. The chain is Zinc finger protein 350 (ZNF350) from Homo sapiens (Human).